Consider the following 723-residue polypeptide: MAAAATMAAAARELVLRAGTSDMEEEEGPLAGGPGLQEPLQLGELDITSDEFILDEVDVHIQANLEDELVKEALKTGVDLRHYSKQVELELQQIEQKSIRDYIQESENIASLHNQITACDAVLERMEQMLGAFQSDLSSISSEIRTLQEQSGAMNIRLRNRQAVRGKLGELVDGLVVPSALVTAILEAPVTEPRFLEQLQELDAKAAAVREQEARGTAACADVRGVLDRLRVKAVTKIREFILQKIYSFRKPMTNYQIPQTALLKYRFFYQFLLGNERATAKEIRDEYVETLSKIYLSYYRSYLGRLMKVQYEEVAEKDDLMGVEDTAKKGFFSKPSLRSRNTIFTLGTRGSVISPTELEAPILVPHTAQRGEQRYPFEALFRSQHYALLDNSCREYLFICEFFVVSGPAAHDLFHAVMGRTLSMTLKHLDSYLADCYDAIAVFLCIHIVLRFRNIAAKRDVPALDRYWEQVLALLWPRFELILEMNVQSVRSTDPQRLGGLDTRPHYITRRYAEFSSALVSINQTIPNERTMQLLGQLQVEVENFVLRVAAEFSSRKEQLVFLINNYDMMLGVLMERAADDSKEVESFQQLLNARTQEFIEELLSPPFGGLVAFVKEAEALIERGQAERLRGEEARVTQLIRGFGSSWKSSVESLSQDVMRSFTNFRNGTSIIQGALTQLIQLYHRFHRVLSQPQLRALPARAELINIHHLMVELKKHKPNF.

At A2 the chain carries N-acetylalanine. 2 coiled-coil regions span residues 107–127 and 194–215; these read ENIA…ERME and RFLE…QEAR. S355 bears the Phosphoserine mark.

The protein belongs to the VPS52 family. In terms of assembly, component of the Golgi-associated retrograde protein (GARP) complex, also called VFT (VPS fifty-three) complex, composed of VPS51, VPS52, VPS53 and VPS54. Component of the endosome-associated retrograde protein (EARP) complex, composed of VPS51, VPS52, VPS53 and VPS50/Syndetin. EIPR1 interacts with both EARP and GARP complexes and mediates the recruitment of the GARP complex to the trans-Golgi network. Interacts with RAB6A and STX10. Interacts with BLTP3B.

It is found in the golgi apparatus. The protein resides in the trans-Golgi network membrane. Its subcellular location is the endosome membrane. The protein localises to the recycling endosome. Its function is as follows. Acts as a component of the GARP complex that is involved in retrograde transport from early and late endosomes to the trans-Golgi network (TGN). The GARP complex is required for the maintenance of the cycling of mannose 6-phosphate receptors between the TGN and endosomes, this cycling is necessary for proper lysosomal sorting of acid hydrolases such as CTSD. Acts as a component of the EARP complex that is involved in endocytic recycling. The EARP complex associates with Rab4-positive endosomes and promotes recycling of internalized transferrin receptor (TFRC) to the plasma membrane. The protein is Vacuolar protein sorting-associated protein 52 homolog (VPS52) of Homo sapiens (Human).